The primary structure comprises 230 residues: Metaxin-2 homolog (230 aa).

This sequence belongs to the metaxin family. As to quaternary structure, associates with the mitochondrial contact site and cristae organizing system (MICOS) complex (also known as MINOS or MitOS complex).

The protein resides in the mitochondrion outer membrane. Functionally, involved in transport of proteins into the mitochondrion. The sequence is that of Metaxin-2 homolog (mtx-2) from Caenorhabditis elegans.